The chain runs to 499 residues: Proline--tRNA ligase (499 aa).

Belongs to the class-II aminoacyl-tRNA synthetase family. ProS type 3 subfamily. In terms of assembly, homodimer.

The protein localises to the cytoplasm. The enzyme catalyses tRNA(Pro) + L-proline + ATP = L-prolyl-tRNA(Pro) + AMP + diphosphate. In terms of biological role, catalyzes the attachment of proline to tRNA(Pro) in a two-step reaction: proline is first activated by ATP to form Pro-AMP and then transferred to the acceptor end of tRNA(Pro). The protein is Proline--tRNA ligase of Bdellovibrio bacteriovorus (strain ATCC 15356 / DSM 50701 / NCIMB 9529 / HD100).